The primary structure comprises 227 residues: Small ribosomal subunit protein uS3 (227 aa).

The KH type-2 domain maps to 39-107 (VRQLLQKRLK…PVHITIEEVR (69 aa)).

Belongs to the universal ribosomal protein uS3 family. In terms of assembly, part of the 30S ribosomal subunit. Forms a tight complex with proteins S10 and S14.

Binds the lower part of the 30S subunit head. Binds mRNA in the 70S ribosome, positioning it for translation. This is Small ribosomal subunit protein uS3 from Coxiella burnetii (strain CbuK_Q154) (Coxiella burnetii (strain Q154)).